The chain runs to 100 residues: Large ribosomal subunit protein uL23 (100 aa).

Belongs to the universal ribosomal protein uL23 family. Part of the 50S ribosomal subunit. Contacts protein L29, and trigger factor when it is bound to the ribosome.

Functionally, one of the early assembly proteins it binds 23S rRNA. One of the proteins that surrounds the polypeptide exit tunnel on the outside of the ribosome. Forms the main docking site for trigger factor binding to the ribosome. This Synechococcus elongatus (strain ATCC 33912 / PCC 7942 / FACHB-805) (Anacystis nidulans R2) protein is Large ribosomal subunit protein uL23.